A 156-amino-acid chain; its full sequence is Small ribosomal subunit protein uS7c (156 aa).

This sequence belongs to the universal ribosomal protein uS7 family. Part of the 30S ribosomal subunit.

Its subcellular location is the plastid. The protein localises to the chloroplast. Its function is as follows. One of the primary rRNA binding proteins, it binds directly to 16S rRNA where it nucleates assembly of the head domain of the 30S subunit. The polypeptide is Small ribosomal subunit protein uS7c (rps7) (Gracilaria tenuistipitata var. liui (Red alga)).